The primary structure comprises 473 residues: MAAAAVAADSKIDGLRDAVAKLGEISENEKAGFISLVSRYLSGEAEQIEWSKIQTPTDEVVVPYDTLAPPPEDLDAMKALLDKLVVLKLNGGLGTTMGCTGPKSVIEVRNGFTFLDLIVIQIESLNKKYGCSVPLLLMNSFNTHDDTQKIVEKYSNSNIEIHTFNQSQYPRIVTEDFLPLPSKGQTGKDGWYPPGHGDVFPSLNNSGKLDTLLSQGKEYVFVANSDNLGAIVDIKILNHLIHNQNEYCMEVTPKTLADVKGGTLISYEGRVQLLEIAQVPDEHVDEFKSIEKFKIFNTNNLWVNLKAIKRLVDAEALKMEIIPNPKEVDGVKVLQLETAAGAAIRFFEKAIGINVPRSRFLPVKATSDLLLVQSDLYTLVDGYVIRNPARVKPSNPSIELGPEFKKVANFLARFKSIPSIVELDSLKVSGDVSFGSGVVLKGNVTIAAKAGVKLEIPDGAVLENKDINGPEDI.

UTP-binding positions include 89-92, lysine 103, glutamine 166, and glycine 195; that span reads LNGG. Residue 91–92 coordinates substrate; that stretch reads GG. Substrate-binding positions include histidine 196 and 224-226; that span reads NSD. Positions 226 and 364 each coordinate UTP.

It belongs to the UDPGP type 1 family.

The protein localises to the cytoplasm. The catalysed reaction is alpha-D-glucose 1-phosphate + UTP + H(+) = UDP-alpha-D-glucose + diphosphate. Functionally, plays a central role as a glucosyl donor in cellular metabolic pathways. The sequence is that of UTP--glucose-1-phosphate uridylyltransferase from Hordeum vulgare (Barley).